The sequence spans 294 residues: MNILENINTEKRNPRSLHLDSMSIAEAVSLMIDEEYGVIEALKEQHRNITEVILATSYSLKNGGRIVYIGAGTSGRLGILDAVECPPTFSVDYNTIVGLIAGGEKAFIQAQEGAEDDANFGKEDLQSINLTAKDIVVGIAASGRTPYVIGALEYANSIGATTVAISCTKQAKISKYAKYSIEAVPGPEVLTGSTRLKAGTTQKLILNMISTLSMVSVGKVYQNLMVDVKPTNQKLIERSKNIICEATGVDYTTAEKFYLKANKSVKVAIVMILNDCDYEKALAILKNNNNFIKS.

An SIS domain is found at 56-219 (TSYSLKNGGR…STLSMVSVGK (164 aa)). Glu-84 serves as the catalytic Proton donor. Residue Glu-115 is part of the active site.

Belongs to the GCKR-like family. MurNAc-6-P etherase subfamily. Homodimer.

It carries out the reaction N-acetyl-D-muramate 6-phosphate + H2O = N-acetyl-D-glucosamine 6-phosphate + (R)-lactate. It functions in the pathway amino-sugar metabolism; 1,6-anhydro-N-acetylmuramate degradation. It participates in amino-sugar metabolism; N-acetylmuramate degradation. Its pathway is cell wall biogenesis; peptidoglycan recycling. Its function is as follows. Specifically catalyzes the cleavage of the D-lactyl ether substituent of MurNAc 6-phosphate, producing GlcNAc 6-phosphate and D-lactate. Together with AnmK, is also required for the utilization of anhydro-N-acetylmuramic acid (anhMurNAc) either imported from the medium or derived from its own cell wall murein, and thus plays a role in cell wall recycling. This is N-acetylmuramic acid 6-phosphate etherase from Francisella tularensis subsp. novicida (strain U112).